The chain runs to 46 residues: Iota-conotoxin-like r11b (46 aa).

2 positions are modified to 4-hydroxyproline: Pro-2 and Pro-11. Disulfide bonds link Cys-5–Cys-19, Cys-12–Cys-22, Cys-18–Cys-27, and Cys-21–Cys-38. Pro-29 is subject to 4-hydroxyproline. Phe-44 is modified (D-phenylalanine).

In terms of processing, the natural D-Phe form of the peptide is more potent than the synthetic L-Phe form. Expressed by the venom duct.

The protein localises to the secreted. In terms of biological role, iota-conotoxins bind to voltage-gated sodium channels (Nav) and act as agonists by shifting the voltage-dependence of activation to more hyperpolarized levels. Produces excitatory symptoms when injected intracranially into mice and is lethal at higher doses. Exposure to frog cutaneous pectoris induces spontaneous and repetitive action potentials. This effect is slowly reversible. Natural peptide (with D-Phe) is active on nerve, but not on muscle. Synthetic peptide (with L-Phe) is not active on both nerve and muscle. This is Iota-conotoxin-like r11b from Conus radiatus (Rayed cone).